A 312-amino-acid chain; its full sequence is Olfactory receptor 6X1 (312 aa).

The Extracellular segment spans residues 1–23 (MRNGTVITEFILLGFPVIQGLQT). An N-linked (GlcNAc...) asparagine glycan is attached at Asn3. The helical transmembrane segment at 24–44 (PLFIAIFLTYILTLAGNGLII) threads the bilayer. The Cytoplasmic portion of the chain corresponds to 45 to 52 (ATVWAEPR). A helical transmembrane segment spans residues 53–73 (LQIPMYFFLCNLSFLEIWYTT). Topologically, residues 74 to 97 (TVIPKLLGTFVVARTVICMSCCLL) are extracellular. A disulfide bridge connects residues Cys95 and Cys187. Residues 98–118 (QAFFHFFVGTTEFLILTIMSF) form a helical membrane-spanning segment. Over 119-137 (DRYLTICNPLHHPTIMTSK) the chain is Cytoplasmic. A helical membrane pass occupies residues 138–158 (LCLQLALSSWVVGFTIVFCQT). At 159 to 195 (MLLIQLPFCGNNVISHFYCDVGPSLKAACIDTSILEL) the chain is on the extracellular side. The chain crosses the membrane as a helical span at residues 196 to 215 (LGVIATILVIPGSLLFNMIS). Over 216–235 (YIYILSAILRIPSATGHQKT) the chain is Cytoplasmic. The chain crosses the membrane as a helical span at residues 236–256 (FSTCASHLTVVSLLYGAVLFM). At 257-269 (YLRPTAHSSFKIN) the chain is on the extracellular side. A helical transmembrane segment spans residues 270–290 (KVVSVLNTILTPLLNPFIYTI). The Cytoplasmic segment spans residues 291–312 (RNKEVKGALRKAMTCPKTGHAK).

It belongs to the G-protein coupled receptor 1 family.

The protein resides in the cell membrane. Odorant receptor. The chain is Olfactory receptor 6X1 (OR6X1) from Homo sapiens (Human).